Here is a 156-residue protein sequence, read N- to C-terminus: ATP synthase subunit b (156 aa).

The helical transmembrane segment at 7–27 threads the bilayer; that stretch reads LFAQMIVFFVLWWVVARFVWP.

The protein belongs to the ATPase B chain family. F-type ATPases have 2 components, F(1) - the catalytic core - and F(0) - the membrane proton channel. F(1) has five subunits: alpha(3), beta(3), gamma(1), delta(1), epsilon(1). F(0) has three main subunits: a(1), b(2) and c(10-14). The alpha and beta chains form an alternating ring which encloses part of the gamma chain. F(1) is attached to F(0) by a central stalk formed by the gamma and epsilon chains, while a peripheral stalk is formed by the delta and b chains.

Its subcellular location is the cell membrane. Functionally, f(1)F(0) ATP synthase produces ATP from ADP in the presence of a proton or sodium gradient. F-type ATPases consist of two structural domains, F(1) containing the extramembraneous catalytic core and F(0) containing the membrane proton channel, linked together by a central stalk and a peripheral stalk. During catalysis, ATP synthesis in the catalytic domain of F(1) is coupled via a rotary mechanism of the central stalk subunits to proton translocation. In terms of biological role, component of the F(0) channel, it forms part of the peripheral stalk, linking F(1) to F(0). The polypeptide is ATP synthase subunit b (Polynucleobacter asymbioticus (strain DSM 18221 / CIP 109841 / QLW-P1DMWA-1) (Polynucleobacter necessarius subsp. asymbioticus)).